Here is a 105-residue protein sequence, read N- to C-terminus: SH3 domain-binding glutamic acid-rich-like protein 2 (105 aa).

The short motif at 61-67 is the SH3-binding element; sequence KGNPLPP.

The protein belongs to the SH3BGR family.

It is found in the nucleus. The sequence is that of SH3 domain-binding glutamic acid-rich-like protein 2 (sh3bgrl2) from Danio rerio (Zebrafish).